A 555-amino-acid chain; its full sequence is Urocanate hydratase (555 aa).

Residues 52-53 (GG), glutamine 130, 176-178 (GMG), glutamate 196, arginine 201, 242-243 (NA), 263-267 (QTSAH), 273-274 (YL), and tyrosine 322 each bind NAD(+). Residue cysteine 410 is part of the active site. Glycine 492 provides a ligand contact to NAD(+).

The protein belongs to the urocanase family. Requires NAD(+) as cofactor.

Its subcellular location is the cytoplasm. It catalyses the reaction 4-imidazolone-5-propanoate = trans-urocanate + H2O. It functions in the pathway amino-acid degradation; L-histidine degradation into L-glutamate; N-formimidoyl-L-glutamate from L-histidine: step 2/3. Functionally, catalyzes the conversion of urocanate to 4-imidazolone-5-propionate. The protein is Urocanate hydratase of Shewanella baltica (strain OS195).